Reading from the N-terminus, the 806-residue chain is Lysine-specific demethylase JMJ15 (806 aa).

Residues 1–43 (MEPFSAAQNKEDKDTSVEPPRRRCHRKNKGTNVEPPSSPYHPK) are disordered. A compositionally biased stretch (basic and acidic residues) spans 9 to 21 (NKEDKDTSVEPPR). Residues 61–102 (APVFHPTSEEFEDTLAYIEKIRPLAESFGICRIVPPSNWSPP) form the JmjN domain. A disordered region spans residues 128–176 (NRGPVKKKTPKGRKRKRGKYSRTVAPKKRNGSVSKSVSTPKATEEENFG). A compositionally biased stretch (basic residues) spans 131 to 157 (PVKKKTPKGRKRKRGKYSRTVAPKKRN). Residues 132–139 (VKKKTPKG) carry the Nuclear localization signal motif. Residues 158-168 (GSVSKSVSTPK) are compositionally biased toward polar residues. Positions 261-427 (KYISSGWNLN…HGQNAVEIYS (167 aa)) constitute a JmjC domain. Fe cation-binding residues include H307, E309, and H395. Positions 514, 517, 528, 531, 539, 542, 545, and 547 each coordinate Zn(2+). The C5HC2 zinc-finger motif lies at 514-566 (CISCFSDLHLSATGCKNCSSLEEYGCTKHDICSCEGKDRFIFLRYTIDELSSL). Residues 629–687 (IMDLAAYHVEPINLGFLVVGKLWCNKHAIFPKGFKSRVKFYNVQDPMRISYYVSEIVDA) enclose the FYR N-terminal domain. The region spanning 689-775 (LLGPLFKVTL…HGQVEYWNHK (87 aa)) is the FYR C-terminal domain.

Belongs to the JARID1 histone demethylase family. Fe(2+) serves as cofactor. In terms of tissue distribution, expressed in roots, cotyledons, shoot apex, rosette and cauline leaves, stems, inflorescences and siliques. Expressed at low levels during vegetative growth but to higher levels in young floral organs.

The protein resides in the nucleus. The catalysed reaction is N(6),N(6),N(6)-trimethyl-L-lysyl(4)-[histone H3] + 2-oxoglutarate + O2 = N(6),N(6)-dimethyl-L-lysyl(4)-[histone H3] + formaldehyde + succinate + CO2. Its function is as follows. Histone demethylase that demethylates 'Lys-4' (H3K4me) of histone H3 with a specific activity for H3K4me3. No activity on H3K4me2, H3K4me1, H3K9me3/2, H3K27me3/2 and H3K36me3/2. Involved in the control of flowering time by demethylating H3K4me3 at the FLC locus and repressing its expression. The repression of FLC level and reduction in H3K4me3 at the FLC locus results in induction of the flowering activator FT, which is a downstream target of FLC. Promotes salt tolerance by down-regulating the expression of several transcriptions factors involved in stress responses via H3K4me3 and H3K4me2 demethylation. The chain is Lysine-specific demethylase JMJ15 from Arabidopsis thaliana (Mouse-ear cress).